A 351-amino-acid polypeptide reads, in one-letter code: Peptide chain release factor 1 (351 aa).

N5-methylglutamine is present on Gln-229.

The protein belongs to the prokaryotic/mitochondrial release factor family. Post-translationally, methylated by PrmC. Methylation increases the termination efficiency of RF1.

The protein localises to the cytoplasm. Its function is as follows. Peptide chain release factor 1 directs the termination of translation in response to the peptide chain termination codons UAG and UAA. In Dinoroseobacter shibae (strain DSM 16493 / NCIMB 14021 / DFL 12), this protein is Peptide chain release factor 1.